Here is a 168-residue protein sequence, read N- to C-terminus: Large ribosomal subunit protein bL9 (168 aa).

Positions 149-168 (QSFEEEPAPEAPAEEAEAAE) are disordered. A compositionally biased stretch (acidic residues) spans 152 to 168 (EEEPAPEAPAEEAEAAE).

This sequence belongs to the bacterial ribosomal protein bL9 family.

Binds to the 23S rRNA. This chain is Large ribosomal subunit protein bL9, found in Desulfovibrio desulfuricans (strain ATCC 27774 / DSM 6949 / MB).